A 227-amino-acid chain; its full sequence is Ubiquitin carboxyl-terminal hydrolase (227 aa).

Positions 3 to 224 (TWTPLESNPE…VRFTVLALTA (222 aa)) constitute a UCH catalytic domain. The Nucleophile role is filled by C93. Residue H164 is the Proton donor of the active site.

The protein belongs to the peptidase C12 family.

It catalyses the reaction Thiol-dependent hydrolysis of ester, thioester, amide, peptide and isopeptide bonds formed by the C-terminal Gly of ubiquitin (a 76-residue protein attached to proteins as an intracellular targeting signal).. Ubiquitin-protein hydrolase is involved both in the processing of ubiquitin precursors and of ubiquitinated proteins. This enzyme is a thiol protease that recognizes and hydrolyzes a peptide bond at the C-terminal glycine of ubiquitin. This Drosophila melanogaster (Fruit fly) protein is Ubiquitin carboxyl-terminal hydrolase (Uch).